The following is a 184-amino-acid chain: MGFLTVLKKMRQKEREMRILLLGLDNAGKTTILKRFNGEPIDTISPTLGFNIKTLEHNGYTLNMWDVGGQKSLRSYWRNYFESTDGLVWVVDSADRMRLESCGQELQVLLQEERLAGATLLVLCNKQDLPGALSSNEIKEILHLEDITTHHWLVAGVSAVTGEKLLSSMDWLIADIAKRIFTLD.

A lipid anchor (N-myristoyl glycine) is attached at glycine 2. GTP is bound by residues glycine 23–threonine 30, aspartate 66–glutamine 70, and asparagine 125–aspartate 128.

The protein belongs to the small GTPase superfamily. Arf family. In terms of tissue distribution, ubiquitously expressed.

Its function is as follows. GTP-binding protein involved in protein trafficking; may modulate vesicle budding and uncoating within the Golgi apparatus. The polypeptide is ADP-ribosylation factor-like protein 2 (Arl2) (Drosophila melanogaster (Fruit fly)).